The following is a 717-amino-acid chain: Photosystem I P700 chlorophyll a apoprotein A1 (717 aa).

Transmembrane regions (helical) follow at residues 59–82 (VFRA…FHGA), 145–168 (LYCT…FHYH), 184–208 (LNHH…HVSL), 280–298 (TAHH…GHMY), 335–358 (WHAQ…HHMY), 374–400 (LSLF…IFMV), 422–444 (AIVS…LYIH), and 520–538 (FLVH…LILL). Residues Cys562 and Cys571 each coordinate [4Fe-4S] cluster. 2 consecutive transmembrane segments (helical) span residues 578–599 (HVFL…HFSW) and 653–675 (LSAY…MFLF). Residue His664 participates in chlorophyll a' binding. 2 residues coordinate chlorophyll a: Met672 and Tyr680. Trp681 serves as a coordination point for phylloquinone. The helical transmembrane segment at 713-717 (AVGVA) threads the bilayer.

Belongs to the PsaA/PsaB family. As to quaternary structure, the PsaA/B heterodimer binds the P700 chlorophyll special pair and subsequent electron acceptors. PSI consists of a core antenna complex that captures photons, and an electron transfer chain that converts photonic excitation into a charge separation. The eukaryotic PSI reaction center is composed of at least 11 subunits. Requires P700 is a chlorophyll a/chlorophyll a' dimer, A0 is one or more chlorophyll a, A1 is one or both phylloquinones and FX is a shared 4Fe-4S iron-sulfur center. as cofactor.

It is found in the plastid. It localises to the chloroplast thylakoid membrane. The enzyme catalyses reduced [plastocyanin] + hnu + oxidized [2Fe-2S]-[ferredoxin] = oxidized [plastocyanin] + reduced [2Fe-2S]-[ferredoxin]. PsaA and PsaB bind P700, the primary electron donor of photosystem I (PSI), as well as the electron acceptors A0, A1 and FX. PSI is a plastocyanin-ferredoxin oxidoreductase, converting photonic excitation into a charge separation, which transfers an electron from the donor P700 chlorophyll pair to the spectroscopically characterized acceptors A0, A1, FX, FA and FB in turn. Oxidized P700 is reduced on the lumenal side of the thylakoid membrane by plastocyanin. The polypeptide is Photosystem I P700 chlorophyll a apoprotein A1 (Cycas revoluta (Sago palm)).